Reading from the N-terminus, the 291-residue chain is ATP phosphoribosyltransferase (291 aa).

Belongs to the ATP phosphoribosyltransferase family. Long subfamily. Mg(2+) is required as a cofactor.

Its subcellular location is the cytoplasm. The enzyme catalyses 1-(5-phospho-beta-D-ribosyl)-ATP + diphosphate = 5-phospho-alpha-D-ribose 1-diphosphate + ATP. It participates in amino-acid biosynthesis; L-histidine biosynthesis; L-histidine from 5-phospho-alpha-D-ribose 1-diphosphate: step 1/9. Feedback inhibited by histidine. Its function is as follows. Catalyzes the condensation of ATP and 5-phosphoribose 1-diphosphate to form N'-(5'-phosphoribosyl)-ATP (PR-ATP). Has a crucial role in the pathway because the rate of histidine biosynthesis seems to be controlled primarily by regulation of HisG enzymatic activity. This is ATP phosphoribosyltransferase from Trichlorobacter lovleyi (strain ATCC BAA-1151 / DSM 17278 / SZ) (Geobacter lovleyi).